We begin with the raw amino-acid sequence, 102 residues long: Integration host factor subunit beta (102 aa).

It belongs to the bacterial histone-like protein family. In terms of assembly, heterodimer of an alpha and a beta chain.

Its function is as follows. This protein is one of the two subunits of integration host factor, a specific DNA-binding protein that functions in genetic recombination as well as in transcriptional and translational control. The sequence is that of Integration host factor subunit beta from Rhizobium rhizogenes (strain K84 / ATCC BAA-868) (Agrobacterium radiobacter).